The sequence spans 559 residues: Urocanate hydratase (559 aa).

NAD(+)-binding positions include 53 to 54 (GG), Q131, 177 to 179 (GMG), E197, R202, 243 to 244 (NA), 264 to 268 (QTSAH), 274 to 275 (YL), and Y323. C411 is an active-site residue. G493 contributes to the NAD(+) binding site.

Belongs to the urocanase family. NAD(+) is required as a cofactor.

The protein resides in the cytoplasm. It catalyses the reaction 4-imidazolone-5-propanoate = trans-urocanate + H2O. Its pathway is amino-acid degradation; L-histidine degradation into L-glutamate; N-formimidoyl-L-glutamate from L-histidine: step 2/3. In terms of biological role, catalyzes the conversion of urocanate to 4-imidazolone-5-propionate. This Pseudomonas aeruginosa (strain ATCC 15692 / DSM 22644 / CIP 104116 / JCM 14847 / LMG 12228 / 1C / PRS 101 / PAO1) protein is Urocanate hydratase.